We begin with the raw amino-acid sequence, 185 residues long: Ribosome-recycling factor (185 aa).

Belongs to the RRF family.

The protein resides in the cytoplasm. Functionally, responsible for the release of ribosomes from messenger RNA at the termination of protein biosynthesis. May increase the efficiency of translation by recycling ribosomes from one round of translation to another. The sequence is that of Ribosome-recycling factor from Novosphingobium aromaticivorans (strain ATCC 700278 / DSM 12444 / CCUG 56034 / CIP 105152 / NBRC 16084 / F199).